The following is a 250-amino-acid chain: PTB-containing, cubilin and LRP1-interacting protein (250 aa).

The PID domain maps to Val-93 to Gly-250. The tract at residues Asp-229–Gly-250 is disordered. 2 positions are modified to phosphoserine: Ser-236 and Ser-247. A compositionally biased stretch (acidic residues) spans Val-241–Gly-250.

Found in a complex with PID1/PCLI1, LRP1 and CUBNI. Interacts with LRP1 and CUBN. In terms of tissue distribution, expressed in subcutaneous fat, heart, skeletal muscle, brain, colon, thymus, spleen, kidney, liver, small intestine, placenta, lung and peripheral blood leukocyte.

The protein resides in the cytoplasm. In terms of biological role, increases proliferation of preadipocytes without affecting adipocytic differentiation. This is PTB-containing, cubilin and LRP1-interacting protein (PID1) from Homo sapiens (Human).